We begin with the raw amino-acid sequence, 357 residues long: D(4) dopamine receptor (357 aa).

Residues 1–32 are Extracellular-facing; the sequence is MGNRSAADADGLLAGRGPGTGGGAGSPGAAAA. Asn-3 carries an N-linked (GlcNAc...) asparagine glycan. Residues 33–55 form a helical membrane-spanning segment; the sequence is LVGGVLLIGAVLAGNALVCVSVA. The Cytoplasmic segment spans residues 56-65; that stretch reads AERALQTPTN. Residues 66-88 form a helical membrane-spanning segment; sequence YFIVSLAAADLLLALLVLPLFVY. Position 75 (Asp-75) interacts with Na(+). Topologically, residues 89–104 are extracellular; that stretch reads SEVQGGVWQFSPGLCD. Cys-103 and Cys-180 are joined by a disulfide. A helical membrane pass occupies residues 105–126; the sequence is ALMAMDVMLCTASIFNLCAISA. A Na(+)-binding site is contributed by Ser-117. The Cytoplasmic portion of the chain corresponds to 127 to 146; the sequence is DRFVAVAVPLSYNRQSGGGR. A helical membrane pass occupies residues 147–170; sequence QLLLIGATWLLSAAVAAPVLCGLN. Residues 171 to 186 lie on the Extracellular side of the membrane; the sequence is DARGRDPAVCRLEDRD. A helical transmembrane segment spans residues 187-208; that stretch reads YVVYSSVCSFFLPCPVMLLLYW. Topologically, residues 209 to 284 are cytoplasmic; sequence ATFRGLRRWE…ITGRERKAMR (76 aa). The interval 225-261 is disordered; the sequence is LHGRRPRRPSGPGPPPPEAVETPEAPEAIPTPDATLA. Positions 233-242 are enriched in pro residues; sequence PSGPGPPPPE. Positions 243 to 259 are enriched in low complexity; the sequence is AVETPEAPEAIPTPDAT. The helical transmembrane segment at 285-307 threads the bilayer; the sequence is VLPVVVGAFLVCWTPFFVVHITG. Residues 308-316 are Extracellular-facing; it reads ALCPACAVP. Cys-310 and Cys-313 are joined by a disulfide. The helical transmembrane segment at 317 to 339 threads the bilayer; that stretch reads PRLVSAVTWLGYVNSALNPLIYT. Residues 340 to 357 are Cytoplasmic-facing; it reads VFNAEFRAVFRKALRLCC. Residue Cys-357 is the site of S-palmitoyl cysteine attachment.

This sequence belongs to the G-protein coupled receptor 1 family. As to quaternary structure, forms homo- and heterooligomers with DRD2. D4.7 allele exhibits higher affinity for homodimers compared to DRD2 heterodimers, while alleles D42. and 4.4 have similar affinities for both. The interaction with DRD2 may modulate agonist-induced downstream signaling. Interacts with CLIC6. Interacts with GPRASP1. May interact with ADORA2A. Interacts with KLHL12. In terms of processing, polyubiquitinated by the BCR(KLHL12) E3 ubiquitin ligase complex: polyubiquitination does not lead to degradation of DRD4 protein. Palmitoylated. Palmitoylation of the C-terminal Cys is important for normal expression at the cell membrane.

The protein resides in the cell membrane. Dopamine receptor responsible for neuronal signaling in the mesolimbic system of the brain, an area of the brain that regulates emotion and complex behavior. Activated by dopamine, but also by epinephrine and norepinephrine, and by numerous synthetic agonists and drugs. Agonist binding triggers signaling via G proteins that inhibit adenylyl cyclase. Modulates the circadian rhythm of contrast sensitivity by regulating the rhythmic expression of NPAS2 in the retinal ganglion cells. In Mustela putorius furo (European domestic ferret), this protein is D(4) dopamine receptor (DRD4).